A 100-amino-acid polypeptide reads, in one-letter code: Transcription and mRNA export factor SUS1 (100 aa).

It belongs to the ENY2 family. Component of the nuclear pore complex (NPC)-associated TREX-2 complex (transcription and export complex 2), composed of at least SUS1, SAC3, THP1, SEM1, and CDC31. TREX-2 contains 2 SUS1 chains. The TREX-2 complex interacts with the nucleoporin NUP1. Component of the 1.8 MDa SAGA transcription coactivator-HAT complex. SAGA is built of 5 distinct domains with specialized functions. Within the SAGA complex, SUS1, SGF11, SGF73 and UBP8 form an additional subcomplex of SAGA called the DUB module (deubiquitination module). Interacts directly with THP1, SAC3, SGF11, and with the RNA polymerase II.

The protein localises to the nucleus. Its subcellular location is the nucleoplasm. It is found in the cytoplasm. It localises to the P-body. In terms of biological role, involved in mRNA export coupled transcription activation by association with both the TREX-2 and the SAGA complexes. At the promoters, SAGA is required for recruitment of the basal transcription machinery. It influences RNA polymerase II transcriptional activity through different activities such as TBP interaction and promoter selectivity, interaction with transcription activators, and chromatin modification through histone acetylation and deubiquitination. Within the SAGA complex, participates in a subcomplex required for deubiquitination of H2B and for the maintenance of steady-state H3 methylation levels. The TREX-2 complex functions in docking export-competent ribonucleoprotein particles (mRNPs) to the nuclear entrance of the nuclear pore complex (nuclear basket). TREX-2 participates in mRNA export and accurate chromatin positioning in the nucleus by tethering genes to the nuclear periphery. May also be involved in cytoplasmic mRNA decay by interaction with components of P-bodies. The polypeptide is Transcription and mRNA export factor SUS1 (Cryptococcus neoformans var. neoformans serotype D (strain B-3501A) (Filobasidiella neoformans)).